The sequence spans 247 residues: tRNA uridine(34) hydroxylase (247 aa).

Residues 124-218 (TQQDVIVIDT…YLEDTQNKNN (95 aa)) enclose the Rhodanese domain. The active-site Cysteine persulfide intermediate is cysteine 178.

It belongs to the TrhO family.

The enzyme catalyses uridine(34) in tRNA + AH2 + O2 = 5-hydroxyuridine(34) in tRNA + A + H2O. Catalyzes oxygen-dependent 5-hydroxyuridine (ho5U) modification at position 34 in tRNAs. The protein is tRNA uridine(34) hydroxylase of Rickettsia conorii (strain ATCC VR-613 / Malish 7).